The primary structure comprises 668 residues: Chitin synthase 8 (668 aa).

Positions 1–26 are enriched in polar residues; it reads MTSRMPTSGHRTSSSSSERGNMSVQQ. The disordered stretch occupies residues 1–62; it reads MTSRMPTSGH…PAPLRPGWTL (62 aa). 3 N-linked (GlcNAc...) asparagine glycosylation sites follow: asparagine 21, asparagine 98, and asparagine 101. The next 2 helical transmembrane spans lie at 136-156 and 162-182; these read WSLI…GWKY and FFLV…ICII. 2 N-linked (GlcNAc...) asparagine glycosylation sites follow: asparagine 216 and asparagine 476. Transmembrane regions (helical) follow at residues 522-542, 548-568, 583-603, and 615-635; these read WALG…IILI, LIAV…VELL, VFLG…CIGF, and YFAG…IILV.

It belongs to the chitin synthase family. Class VIII subfamily.

Its subcellular location is the cell membrane. The protein resides in the cell septum. It carries out the reaction [(1-&gt;4)-N-acetyl-beta-D-glucosaminyl](n) + UDP-N-acetyl-alpha-D-glucosamine = [(1-&gt;4)-N-acetyl-beta-D-glucosaminyl](n+1) + UDP + H(+). Polymerizes chitin, a structural polymer of the cell wall and septum, by transferring the sugar moiety of UDP-GlcNAc to the non-reducing end of the growing chitin polymer. Participated in the development of cell wall and plays a critical role in fungal response to environmental stresses. Necessary for pathogenicity and deoxinivalenol (DON) production. The chain is Chitin synthase 8 from Gibberella zeae (strain ATCC MYA-4620 / CBS 123657 / FGSC 9075 / NRRL 31084 / PH-1) (Wheat head blight fungus).